Consider the following 56-residue polypeptide: uncharacterized protein (56 aa).

Positions 15–56 (SIGNISSGNINNSIGNSSSSGCDDVFNNSTNNNNNNNNNNNK) are disordered.

This is an uncharacterized protein from Dictyostelium discoideum (Social amoeba).